Consider the following 102-residue polypeptide: Large ribosomal subunit protein uL23 (102 aa).

Belongs to the universal ribosomal protein uL23 family. As to quaternary structure, part of the 50S ribosomal subunit. Contacts protein L29, and trigger factor when it is bound to the ribosome.

In terms of biological role, one of the early assembly proteins it binds 23S rRNA. One of the proteins that surrounds the polypeptide exit tunnel on the outside of the ribosome. Forms the main docking site for trigger factor binding to the ribosome. This is Large ribosomal subunit protein uL23 from Cutibacterium acnes (strain DSM 16379 / KPA171202) (Propionibacterium acnes).